Reading from the N-terminus, the 184-residue chain is Phosducin-like protein 3 (184 aa).

Residues 45–184 (HGELKEIDEQ…VKNNKFKEDD (140 aa)) are thioredoxin fold.

Belongs to the phosducin family.

This chain is Phosducin-like protein 3 (phlp3), found in Dictyostelium discoideum (Social amoeba).